The chain runs to 867 residues: Valine--tRNA ligase (867 aa).

The 'HIGH' region motif lies at 42-52 (PNITGKIHMGH). The 'KMSKS' region motif lies at 521-525 (KMSKS). K524 is a binding site for ATP. Residues 794-867 (LGTLIDVKSE…QIISDLEAKA (74 aa)) are a coiled coil.

The protein belongs to the class-I aminoacyl-tRNA synthetase family. ValS type 1 subfamily. In terms of assembly, monomer.

The protein resides in the cytoplasm. The catalysed reaction is tRNA(Val) + L-valine + ATP = L-valyl-tRNA(Val) + AMP + diphosphate. In terms of biological role, catalyzes the attachment of valine to tRNA(Val). As ValRS can inadvertently accommodate and process structurally similar amino acids such as threonine, to avoid such errors, it has a 'posttransfer' editing activity that hydrolyzes mischarged Thr-tRNA(Val) in a tRNA-dependent manner. This chain is Valine--tRNA ligase, found in Fervidobacterium nodosum (strain ATCC 35602 / DSM 5306 / Rt17-B1).